The following is a 53-amino-acid chain: Large ribosomal subunit protein eL24 (53 aa).

Residues C4, C7, C30, and C34 each contribute to the Zn(2+) site. A C4-type zinc finger spans residues 4–34; the sequence is CSFCHEEIEPGTGKMYVKRDGTIYFFCSSKC.

It belongs to the eukaryotic ribosomal protein eL24 family. Part of the 50S ribosomal subunit. Forms a cluster with proteins L3 and L14. The cofactor is Zn(2+).

Functionally, binds to the 23S rRNA. In Methanothermobacter thermautotrophicus (strain ATCC 29096 / DSM 1053 / JCM 10044 / NBRC 100330 / Delta H) (Methanobacterium thermoautotrophicum), this protein is Large ribosomal subunit protein eL24.